Here is a 743-residue protein sequence, read N- to C-terminus: Pentatricopeptide repeat-containing protein At2g16880 (743 aa).

16 PPR repeats span residues 130 to 164 (SKAL…KLKP), 165 to 202 (NLLT…GVSL), 203 to 233 (NVQT…MVSE), 239 to 273 (DNVT…GLVP), 274 to 308 (NRVT…NVLP), 309 to 343 (DLCT…KLQP), 344 to 378 (DVVT…GVKA), 379 to 414 (NQVT…GFSP), 415 to 449 (DIVT…GIKM), 450 to 484 (NTIT…GFIV), 485 to 519 (DEVT…KITP), 520 to 554 (TVST…GLLP), 555 to 589 (DDST…SFKP), 590 to 620 (DNYT…LIEE), 624 to 658 (DTVT…GLEP), and 659 to 689 (DRFT…FSGK).

This sequence belongs to the PPR family. P subfamily.

This chain is Pentatricopeptide repeat-containing protein At2g16880, found in Arabidopsis thaliana (Mouse-ear cress).